Here is a 487-residue protein sequence, read N- to C-terminus: N-succinylglutamate 5-semialdehyde dehydrogenase (487 aa).

221–226 (GSSDTG) is an NAD(+) binding site. Catalysis depends on residues E244 and C278.

This sequence belongs to the aldehyde dehydrogenase family. AstD subfamily.

The catalysed reaction is N-succinyl-L-glutamate 5-semialdehyde + NAD(+) + H2O = N-succinyl-L-glutamate + NADH + 2 H(+). Its pathway is amino-acid degradation; L-arginine degradation via AST pathway; L-glutamate and succinate from L-arginine: step 4/5. Catalyzes the NAD-dependent reduction of succinylglutamate semialdehyde into succinylglutamate. This chain is N-succinylglutamate 5-semialdehyde dehydrogenase, found in Burkholderia pseudomallei (strain 1106a).